A 93-amino-acid chain; its full sequence is Protamine-3 (93 aa).

The segment at 1–93 (MGSRCAKLGT…QSPEPKQTRS (93 aa)) is disordered. Acidic residues predominate over residues 37-57 (EGEEEEEGEEEEEEEGEEEEL). Residues 81 to 93 (EVQQSPEPKQTRS) are compositionally biased toward polar residues. A Phosphoserine modification is found at S85.

Belongs to the protamine P3 family.

The protein resides in the nucleus. It is found in the chromosome. Functionally, protamines substitute for histones in the chromatin of sperm during the haploid phase of spermatogenesis. They compact sperm DNA into a highly condensed, stable and inactive complex. This chain is Protamine-3 (PRM3), found in Bos taurus (Bovine).